We begin with the raw amino-acid sequence, 253 residues long: MASGSNWLSGVNVVLVMAYGSLVFVLLFIFVKRQIMRFAMKSRRGPHVPVGHNAPKDLKEEIDIRLSKVQDIKYEPQLLADDDARLLQLETQGNHNCYNYLYRMKALDAIRASEIPFHAEGRHPHSLMGKNFRSYLLDLRNTSTPFKGVRKALIDTLLDGYETARYGTGVFGLSEYLRYQEALSELATVVKARSGSSQRQHQSAAKDLTQSPEVSPTTIQVTYLPSSQKSKRAKHFLELKSFKDNYNTLESTL.

The chain crosses the membrane as a helical span at residues 11-31 (VNVVLVMAYGSLVFVLLFIFV). The disordered stretch occupies residues 194–213 (SGSSQRQHQSAAKDLTQSPE).

It is found in the membrane. Its subcellular location is the golgi apparatus. The protein resides in the mitochondrion. Functionally, general regulator of phagocytosis. Required to uptake Gram negative bacterium by macrophages. This chain is Protein C1orf43 homolog, found in Bos taurus (Bovine).